We begin with the raw amino-acid sequence, 195 residues long: Molybdenum cofactor guanylyltransferase (195 aa).

GTP contacts are provided by residues 10–12 (LAG), Lys-23, Asn-51, Asp-69, and Asp-99. Residue Asp-99 coordinates Mg(2+).

This sequence belongs to the MobA family. As to quaternary structure, monomer. It depends on Mg(2+) as a cofactor.

It localises to the cytoplasm. The catalysed reaction is Mo-molybdopterin + GTP + H(+) = Mo-molybdopterin guanine dinucleotide + diphosphate. Functionally, transfers a GMP moiety from GTP to Mo-molybdopterin (Mo-MPT) cofactor (Moco or molybdenum cofactor) to form Mo-molybdopterin guanine dinucleotide (Mo-MGD) cofactor. The protein is Molybdenum cofactor guanylyltransferase of Histophilus somni (strain 2336) (Haemophilus somnus).